The following is a 368-amino-acid chain: MSKRDYYQVLGVPRTASEDDLKKAYRRCAMKYHPDRNPGDAAAEAAFKECKEAYEVLADTKKRKLYDTHGHAAFEHGVGGGNAPDMNDIFGDIFGNIFGGARASRRGADVGYMVELDLEEAVAGVERQIQIPTLVECTHCNGSGSEDGHVETCGTCRGSGQVRIQRGIFAMQQTCPHCGGRGVIIRNPCKVCNGAGRVEDHKTLSVKIPAGVDNGDRIRLSGEGEQGPDGVPPGDLYVEVRVREHPIFQRDGDDLHCEVPVRISQAALGDIVRVATLDGEAEIRIPAETQSGKLFRLRGKGVRSVRSRTEGDLYCRIVVETPVNLTAEQRKLLEQFEMTFAGEDARKHSPKSATFLDGVKSFWDRMTS.

One can recognise a J domain in the interval 5–70 (DYYQVLGVPR…KKRKLYDTHG (66 aa)). A CR-type zinc finger spans residues 124–201 (GVERQIQIPT…CNGAGRVEDH (78 aa)). Zn(2+) is bound by residues cysteine 137, cysteine 140, cysteine 153, cysteine 156, cysteine 175, cysteine 178, cysteine 189, and cysteine 192. CXXCXGXG motif repeat units follow at residues 137–144 (CTHCNGSG), 153–160 (CGTCRGSG), 175–182 (CPHCGGRG), and 189–196 (CKVCNGAG).

The protein belongs to the DnaJ family. In terms of assembly, homodimer. The cofactor is Zn(2+).

It localises to the cytoplasm. Functionally, participates actively in the response to hyperosmotic and heat shock by preventing the aggregation of stress-denatured proteins and by disaggregating proteins, also in an autonomous, DnaK-independent fashion. Unfolded proteins bind initially to DnaJ; upon interaction with the DnaJ-bound protein, DnaK hydrolyzes its bound ATP, resulting in the formation of a stable complex. GrpE releases ADP from DnaK; ATP binding to DnaK triggers the release of the substrate protein, thus completing the reaction cycle. Several rounds of ATP-dependent interactions between DnaJ, DnaK and GrpE are required for fully efficient folding. Also involved, together with DnaK and GrpE, in the DNA replication of plasmids through activation of initiation proteins. In Xylella fastidiosa (strain M12), this protein is Chaperone protein DnaJ.